The following is a 72-amino-acid chain: Translation initiation factor IF-1 (72 aa).

In terms of domain architecture, S1-like spans 1 to 72 (MAKSDVIEVD…DKGRITYRYK (72 aa)).

This sequence belongs to the IF-1 family. As to quaternary structure, component of the 30S ribosomal translation pre-initiation complex which assembles on the 30S ribosome in the order IF-2 and IF-3, IF-1 and N-formylmethionyl-tRNA(fMet); mRNA recruitment can occur at any time during PIC assembly.

It is found in the cytoplasm. Its function is as follows. One of the essential components for the initiation of protein synthesis. Stabilizes the binding of IF-2 and IF-3 on the 30S subunit to which N-formylmethionyl-tRNA(fMet) subsequently binds. Helps modulate mRNA selection, yielding the 30S pre-initiation complex (PIC). Upon addition of the 50S ribosomal subunit IF-1, IF-2 and IF-3 are released leaving the mature 70S translation initiation complex. This chain is Translation initiation factor IF-1, found in Sulfurimonas denitrificans (strain ATCC 33889 / DSM 1251) (Thiomicrospira denitrificans (strain ATCC 33889 / DSM 1251)).